Reading from the N-terminus, the 402-residue chain is Dual-specificity RNA methyltransferase RlmN (402 aa).

Residue E94 is the Proton acceptor of the active site. The Radical SAM core domain maps to 100–351 (EDDRGTLCIS…ATVRKTRGDD (252 aa)). C107 and C356 form a disulfide bridge. [4Fe-4S] cluster-binding residues include C114, C118, and C121. S-adenosyl-L-methionine contacts are provided by residues 182-183 (GE), S214, 236-238 (SLH), and N313. The active-site S-methylcysteine intermediate is C356.

This sequence belongs to the radical SAM superfamily. RlmN family. The cofactor is [4Fe-4S] cluster.

The protein localises to the cytoplasm. It catalyses the reaction adenosine(2503) in 23S rRNA + 2 reduced [2Fe-2S]-[ferredoxin] + 2 S-adenosyl-L-methionine = 2-methyladenosine(2503) in 23S rRNA + 5'-deoxyadenosine + L-methionine + 2 oxidized [2Fe-2S]-[ferredoxin] + S-adenosyl-L-homocysteine. The catalysed reaction is adenosine(37) in tRNA + 2 reduced [2Fe-2S]-[ferredoxin] + 2 S-adenosyl-L-methionine = 2-methyladenosine(37) in tRNA + 5'-deoxyadenosine + L-methionine + 2 oxidized [2Fe-2S]-[ferredoxin] + S-adenosyl-L-homocysteine. Functionally, specifically methylates position 2 of adenine 2503 in 23S rRNA and position 2 of adenine 37 in tRNAs. m2A2503 modification seems to play a crucial role in the proofreading step occurring at the peptidyl transferase center and thus would serve to optimize ribosomal fidelity. This Polynucleobacter asymbioticus (strain DSM 18221 / CIP 109841 / QLW-P1DMWA-1) (Polynucleobacter necessarius subsp. asymbioticus) protein is Dual-specificity RNA methyltransferase RlmN.